The primary structure comprises 557 residues: Protein NRT1/ PTR FAMILY 2.6 (557 aa).

A run of 12 helical transmembrane segments spans residues 26–46 (ITFP…LGWL), 67–87 (ILNI…IAAD), 89–109 (FFGT…GVVL), 136–156 (NIQL…AGGL), 177–197 (FFNW…TAIV), 203–223 (ISWS…LIVF), 318–338 (IIPL…QLGL), 356–376 (IPAG…IIVN), 398–418 (VGIG…VEAK), 439–459 (VLWL…HFPG), 478–498 (SITS…IDLI), and 518–538 (YWIL…CSWF).

This sequence belongs to the major facilitator superfamily. Proton-dependent oligopeptide transporter (POT/PTR) (TC 2.A.17) family. Expressed in roots.

The protein resides in the membrane. Functionally, transporter involved in a passive nitrate efflux. The protein is Protein NRT1/ PTR FAMILY 2.6 (NPF2.6) of Arabidopsis thaliana (Mouse-ear cress).